The primary structure comprises 444 residues: Light-independent protochlorophyllide reductase subunit N (444 aa).

Cysteine 36, cysteine 61, and cysteine 118 together coordinate [4Fe-4S] cluster.

This sequence belongs to the BchN/ChlN family. In terms of assembly, protochlorophyllide reductase is composed of three subunits; BchL, BchN and BchB. Forms a heterotetramer of two BchB and two BchN subunits. The cofactor is [4Fe-4S] cluster.

The enzyme catalyses chlorophyllide a + oxidized 2[4Fe-4S]-[ferredoxin] + 2 ADP + 2 phosphate = protochlorophyllide a + reduced 2[4Fe-4S]-[ferredoxin] + 2 ATP + 2 H2O. Its pathway is porphyrin-containing compound metabolism; bacteriochlorophyll biosynthesis (light-independent). In terms of biological role, component of the dark-operative protochlorophyllide reductase (DPOR) that uses Mg-ATP and reduced ferredoxin to reduce ring D of protochlorophyllide (Pchlide) to form chlorophyllide a (Chlide). This reaction is light-independent. The NB-protein (BchN-BchB) is the catalytic component of the complex. This Chloroflexus aurantiacus (strain ATCC 29366 / DSM 635 / J-10-fl) protein is Light-independent protochlorophyllide reductase subunit N.